The sequence spans 252 residues: Thiazole synthase (252 aa).

Catalysis depends on K95, which acts as the Schiff-base intermediate with DXP. 1-deoxy-D-xylulose 5-phosphate contacts are provided by residues G156, 182–183 (AG), and 204–205 (NT).

Belongs to the ThiG family. As to quaternary structure, homotetramer. Forms heterodimers with either ThiH or ThiS.

The protein localises to the cytoplasm. The catalysed reaction is [ThiS sulfur-carrier protein]-C-terminal-Gly-aminoethanethioate + 2-iminoacetate + 1-deoxy-D-xylulose 5-phosphate = [ThiS sulfur-carrier protein]-C-terminal Gly-Gly + 2-[(2R,5Z)-2-carboxy-4-methylthiazol-5(2H)-ylidene]ethyl phosphate + 2 H2O + H(+). It functions in the pathway cofactor biosynthesis; thiamine diphosphate biosynthesis. Its function is as follows. Catalyzes the rearrangement of 1-deoxy-D-xylulose 5-phosphate (DXP) to produce the thiazole phosphate moiety of thiamine. Sulfur is provided by the thiocarboxylate moiety of the carrier protein ThiS. In vitro, sulfur can be provided by H(2)S. In Shewanella sp. (strain ANA-3), this protein is Thiazole synthase.